A 447-amino-acid polypeptide reads, in one-letter code: Argininosuccinate synthase (447 aa).

ATP contacts are provided by residues 17–25 (AFSGGLDTS) and A43. Y99 is a binding site for L-citrulline. Positions 129 and 131 each coordinate ATP. L-aspartate is bound by residues T131, N135, and D136. N135 contributes to the L-citrulline binding site. D136 is a binding site for ATP. R139 and S192 together coordinate L-citrulline. Residue D194 participates in ATP binding. Residues T201, E203, and E280 each contribute to the L-citrulline site.

This sequence belongs to the argininosuccinate synthase family. Type 2 subfamily. Homotetramer.

Its subcellular location is the cytoplasm. It catalyses the reaction L-citrulline + L-aspartate + ATP = 2-(N(omega)-L-arginino)succinate + AMP + diphosphate + H(+). It participates in amino-acid biosynthesis; L-arginine biosynthesis; L-arginine from L-ornithine and carbamoyl phosphate: step 2/3. In Escherichia fergusonii (strain ATCC 35469 / DSM 13698 / CCUG 18766 / IAM 14443 / JCM 21226 / LMG 7866 / NBRC 102419 / NCTC 12128 / CDC 0568-73), this protein is Argininosuccinate synthase.